Here is a 1826-residue protein sequence, read N- to C-terminus: Transcription initiation factor TFIID subunit 1-like (1826 aa).

3 disordered regions span residues 118-141 (DESQ…YDED), 532-555 (IPDE…SSLK), and 1252-1276 (RLKR…MKER). A compositionally biased stretch (basic and acidic residues) spans 1252-1268 (RLKRNQEKEKLKGPPEK). The Nuclear localization signal signature appears at 1370-1377 (PPKKKRRV). Bromo domains lie at 1395–1503 (RRRT…LKEK) and 1517–1626 (LLDD…ITEY). Positions 1648-1826 (AELESLDPMT…SGEHKDGHGK (179 aa)) are disordered. Over residues 1660 to 1700 (PYTSQPPDMYDTNTSLSTSRDASVFQDESNLSVLDISTATP) the composition is skewed to polar residues. Composition is skewed to acidic residues over residues 1714-1729 (EDSD…EEED), 1740-1750 (GDGDLADEEEG), and 1768-1783 (EGED…EEGD). The span at 1787–1797 (SAIQLSESGSD) shows a compositional bias: polar residues. The span at 1817-1826 (SGEHKDGHGK) shows a compositional bias: basic and acidic residues.

This sequence belongs to the TAF1 family. Can bind directly to TATA-box binding protein (TBP). Interacts (via bromo domains) with acetylated lysine residues on the N-terminus of histone H1.4, H2A, H2B, H3 and H4 (in vitro). In terms of tissue distribution, testis specific, expressed apparently in germ cells.

The protein localises to the nucleus. Its function is as follows. May act as a functional substitute for TAF1/TAFII250 during male meiosis, when sex chromosomes are transcriptionally silenced. The sequence is that of Transcription initiation factor TFIID subunit 1-like (TAF1L) from Homo sapiens (Human).